The sequence spans 452 residues: Phosphoglucosamine mutase (452 aa).

The Phosphoserine intermediate role is filled by S108. Residues S108, D247, D249, and D251 each coordinate Mg(2+). S108 carries the phosphoserine modification.

This sequence belongs to the phosphohexose mutase family. The cofactor is Mg(2+). In terms of processing, activated by phosphorylation.

It catalyses the reaction alpha-D-glucosamine 1-phosphate = D-glucosamine 6-phosphate. Functionally, catalyzes the conversion of glucosamine-6-phosphate to glucosamine-1-phosphate. The chain is Phosphoglucosamine mutase from Burkholderia pseudomallei (strain 668).